A 429-amino-acid polypeptide reads, in one-letter code: Light-independent protochlorophyllide reductase subunit N (429 aa).

Residues cysteine 32, cysteine 57, and cysteine 118 each contribute to the [4Fe-4S] cluster site.

This sequence belongs to the BchN/ChlN family. As to quaternary structure, protochlorophyllide reductase is composed of three subunits; BchL, BchN and BchB. Forms a heterotetramer of two BchB and two BchN subunits. [4Fe-4S] cluster serves as cofactor.

It carries out the reaction chlorophyllide a + oxidized 2[4Fe-4S]-[ferredoxin] + 2 ADP + 2 phosphate = protochlorophyllide a + reduced 2[4Fe-4S]-[ferredoxin] + 2 ATP + 2 H2O. It functions in the pathway porphyrin-containing compound metabolism; bacteriochlorophyll biosynthesis (light-independent). Functionally, component of the dark-operative protochlorophyllide reductase (DPOR) that uses Mg-ATP and reduced ferredoxin to reduce ring D of protochlorophyllide (Pchlide) to form chlorophyllide a (Chlide). This reaction is light-independent. The NB-protein (BchN-BchB) is the catalytic component of the complex. This chain is Light-independent protochlorophyllide reductase subunit N, found in Rhodopseudomonas palustris (strain ATCC BAA-98 / CGA009).